A 220-amino-acid polypeptide reads, in one-letter code: UPF0441 protein Spro_4274 (220 aa).

Residues 181 to 220 (MAPKPAVTNTVTRGGFGESVAKQTSMQRSSATSSSRSMGG) are disordered. Positions 203–220 (QTSMQRSSATSSSRSMGG) are enriched in low complexity.

Belongs to the UPF0441 family.

This chain is UPF0441 protein Spro_4274, found in Serratia proteamaculans (strain 568).